The chain runs to 93 residues: Exodeoxyribonuclease 7 small subunit (93 aa).

Residues 1 to 17 (MAKSSASSLSSAKPVAA) show a composition bias toward low complexity. The disordered stretch occupies residues 1-22 (MAKSSASSLSSAKPVAAGPDAS).

This sequence belongs to the XseB family. In terms of assembly, heterooligomer composed of large and small subunits.

Its subcellular location is the cytoplasm. The enzyme catalyses Exonucleolytic cleavage in either 5'- to 3'- or 3'- to 5'-direction to yield nucleoside 5'-phosphates.. Bidirectionally degrades single-stranded DNA into large acid-insoluble oligonucleotides, which are then degraded further into small acid-soluble oligonucleotides. The chain is Exodeoxyribonuclease 7 small subunit from Polaromonas naphthalenivorans (strain CJ2).